Here is a 311-residue protein sequence, read N- to C-terminus: Methionyl-tRNA formyltransferase (311 aa).

109 to 112 (SLLP) contributes to the (6S)-5,6,7,8-tetrahydrofolate binding site.

Belongs to the Fmt family.

The catalysed reaction is L-methionyl-tRNA(fMet) + (6R)-10-formyltetrahydrofolate = N-formyl-L-methionyl-tRNA(fMet) + (6S)-5,6,7,8-tetrahydrofolate + H(+). In terms of biological role, attaches a formyl group to the free amino group of methionyl-tRNA(fMet). The formyl group appears to play a dual role in the initiator identity of N-formylmethionyl-tRNA by promoting its recognition by IF2 and preventing the misappropriation of this tRNA by the elongation apparatus. This is Methionyl-tRNA formyltransferase from Solibacter usitatus (strain Ellin6076).